Here is a 137-residue protein sequence, read N- to C-terminus: Phosphoribosyl-AMP cyclohydrolase (137 aa).

D84 provides a ligand contact to Mg(2+). C85 is a Zn(2+) binding site. The Mg(2+) site is built by D86 and D88. Positions 101 and 108 each coordinate Zn(2+).

This sequence belongs to the PRA-CH family. Homodimer. The cofactor is Mg(2+). Zn(2+) serves as cofactor.

Its subcellular location is the cytoplasm. The enzyme catalyses 1-(5-phospho-beta-D-ribosyl)-5'-AMP + H2O = 1-(5-phospho-beta-D-ribosyl)-5-[(5-phospho-beta-D-ribosylamino)methylideneamino]imidazole-4-carboxamide. The protein operates within amino-acid biosynthesis; L-histidine biosynthesis; L-histidine from 5-phospho-alpha-D-ribose 1-diphosphate: step 3/9. Catalyzes the hydrolysis of the adenine ring of phosphoribosyl-AMP. The polypeptide is Phosphoribosyl-AMP cyclohydrolase (Chlorobium chlorochromatii (strain CaD3)).